The following is a 192-amino-acid chain: MLLSDRDLAAEIKAGTLALEPFDPALVQPSSIDVRLDKLFRVFNNHLYTHIDPSRQQDDLTSTVEVPAGEPFVLHPGEFVLASTLEVISLGDQLAGRLEGKSSLGRLGLLTHSTAGFIDPGFSGHVTLELSNVANLPIMLWPGMKIGQLCIFRLSSPAEYPYGSAVYGSRYQGQRGPTPSRSWQSWHTWPTR.

Residues 101 to 106, D119, 127 to 129, Q148, Y162, and Q174 contribute to the dCTP site; these read KSSLGR and TLE. The Proton donor/acceptor role is filled by E129. The disordered stretch occupies residues 171–192; the sequence is YQGQRGPTPSRSWQSWHTWPTR.

The protein belongs to the dCTP deaminase family. As to quaternary structure, homotrimer.

It catalyses the reaction dCTP + 2 H2O = dUMP + NH4(+) + diphosphate. Its pathway is pyrimidine metabolism; dUMP biosynthesis; dUMP from dCTP: step 1/1. Functionally, bifunctional enzyme that catalyzes both the deamination of dCTP to dUTP and the hydrolysis of dUTP to dUMP without releasing the toxic dUTP intermediate. The chain is dCTP deaminase, dUMP-forming from Salinispora arenicola (strain CNS-205).